Here is a 132-residue protein sequence, read N- to C-terminus: Small ribosomal subunit protein uS11 (132 aa).

The disordered stretch occupies residues 110–132; it reads IEDVTPVPSDSTRRKGGRRGRRL. The segment covering 123–132 has biased composition (basic residues); the sequence is RKGGRRGRRL.

It belongs to the universal ribosomal protein uS11 family. Component of the small ribosomal subunit. Mature ribosomes consist of a small (40S) and a large (60S) subunit. The 40S subunit contains about 32 different proteins and 1 molecule of RNA (18S). The 60S subunit contains 45 different proteins and 3 molecules of RNA (25S, 5.8S and 5S).

The protein localises to the cytoplasm. Functionally, component of the ribosome, a large ribonucleoprotein complex responsible for the synthesis of proteins in the cell. The small ribosomal subunit (SSU) binds messenger RNAs (mRNAs) and translates the encoded message by selecting cognate aminoacyl-transfer RNA (tRNA) molecules. The large subunit (LSU) contains the ribosomal catalytic site termed the peptidyl transferase center (PTC), which catalyzes the formation of peptide bonds, thereby polymerizing the amino acids delivered by tRNAs into a polypeptide chain. The nascent polypeptides leave the ribosome through a tunnel in the LSU and interact with protein factors that function in enzymatic processing, targeting, and the membrane insertion of nascent chains at the exit of the ribosomal tunnel. RPS14B is involved in nucleolar processing of pre-18S ribosomal RNA and ribosome assembly. The chain is Small ribosomal subunit protein uS11 (RPS14B) from Candida albicans (strain SC5314 / ATCC MYA-2876) (Yeast).